The following is a 370-amino-acid chain: MPPLSLLIKPASSGCNLKCTYCFYHSLSDNRNVKSYGIMRDEVLESMVKRVLNEANGHCSFAFQGGEPTLAGLEFFEKLMELQRKHNYKNLKIYNSLQTNGTLIDESWAKFLSENKFLVGLSMDGPKEIHNLNRKDCCGLDTFSKVERAAELFKKYKVEFNILCVVTSNTARHVNKVYKYFKEKDFKFLQFINCLDPLYEEKGKYNYSLKPKDYTKFLKNLFDFWYEDFLNGNRVSIRYFDGLLETILLGKSSSCGMNGTCTCQFVVESDGSVYPCDFYVLDKWRLGNIQDMTMKELFETNKNHEFIKLSFKVHEECKKCKWFRLCKGGCRRCRDSKEDSALELNYYCQSYKEFFEYAFPRLINVANNIK.

In terms of domain architecture, Radical SAM core spans 1–227 (MPPLSLLIKP…LKNLFDFWYE (227 aa)). [4Fe-4S] cluster contacts are provided by Cys15 and Cys19. Tyr21 serves as a coordination point for S-adenosyl-L-methionine. [4Fe-4S] cluster is bound at residue Cys22. S-adenosyl-L-methionine is bound by residues Gly66, Ser122, Arg134, and Leu195. Cys255, Cys261, and Cys276 together coordinate [4Fe-4S] cluster. Asp277 acts as the Proton acceptor in catalysis. [4Fe-4S] cluster-binding residues include Cys317, Cys320, Cys326, Cys330, and Cys348.

It belongs to the radical SAM superfamily. Anaerobic sulfatase-maturating enzyme family. Monomer. The cofactor is [4Fe-4S] cluster.

It catalyses the reaction L-cysteinyl-[sulfatase] + S-adenosyl-L-methionine + H2O = 3-oxo-L-alanyl-[sulfatase] + hydrogen sulfide + 5'-deoxyadenosine + L-methionine + 2 H(+). The protein operates within protein modification; sulfatase oxidation. Its function is as follows. Involved in 'Cys-type' sulfatase maturation under anaerobic conditions. Catalyzes the post-translational modification of cysteine ('Cys-51' in the arylsulfatase CPF_0221) into 3-oxoalanine (also known as C(alpha)-formylglycine (FGly)), by a free radical chemical mechanism initiated via the reductive cleavage of S-adenosyl-L-methionine (SAM). Is also able to oxidize a serine residue in a synthetic substrate to FGly in vitro, and in a serine variant of a Cys-type sulfatase in vivo, but this activity is not physiological. Converts threonyl peptides to the corresponding ketone product, and also allo-threonyl peptides, but with a significantly reduced efficiency. The sequence is that of Cysteine-type anaerobic sulfatase-maturating enzyme from Clostridium perfringens (strain ATCC 13124 / DSM 756 / JCM 1290 / NCIMB 6125 / NCTC 8237 / Type A).